Consider the following 80-residue polypeptide: Sulfur carrier protein TusA (80 aa).

The Cysteine persulfide intermediate role is filled by Cys-17.

The protein belongs to the sulfur carrier protein TusA family.

It localises to the cytoplasm. Its function is as follows. Sulfur carrier protein which probably makes part of a sulfur-relay system. The protein is Sulfur carrier protein TusA of Pseudomonas putida (strain ATCC 47054 / DSM 6125 / CFBP 8728 / NCIMB 11950 / KT2440).